Reading from the N-terminus, the 1604-residue chain is Putative surface cell antigen sca2 (1604 aa).

An N-terminal signal peptide occupies residues 1-33 (MSLQNSHSKKYVLTFFMSTCLLTSSFLSTSARA). 3 disordered regions span residues 324-354 (TTKPFTKHSRTTTNTAGISSGVPFDTGRTKP), 554-603 (NVNN…SNPN), and 1183-1240 (QQEN…KSLL). Low complexity predominate over residues 554 to 564 (NVNNNSNKGQN). Pro residues predominate over residues 568–587 (ILPPTPPLNGSMPPSPPPPL). 2 stretches are compositionally biased toward basic and acidic residues: residues 1193-1213 (SSTKDDPQPEDSNKKSEKSDS) and 1227-1240 (SKNDKSSDDKKSLL). Positions 1325 to 1604 (EASINRGVWI…QGLIKLKVNL (280 aa)) constitute an Autotransporter domain.

The protein localises to the cell outer membrane. The polypeptide is Putative surface cell antigen sca2 (sca2) (Rickettsia felis (strain ATCC VR-1525 / URRWXCal2) (Rickettsia azadi)).